The chain runs to 1892 residues: Protein TIC 214 (1892 aa).

The next 6 membrane-spanning stretches (helical) occupy residues 18-38 (IINS…FSIG), 64-84 (FITG…HLAL), 87-107 (PHTI…WNNH), 124-144 (LSIQ…HFIL), 172-192 (VGWL…LVWI), and 221-241 (IFSI…PSPI). Disordered stretches follow at residues 250–300 (SKTE…EGWD), 794–814 (REEQ…ENKR), and 1581–1609 (RIQE…LGPV). The segment covering 256-268 (VESEEEKDVEIET) has biased composition (acidic residues). Over residues 1581-1602 (RIQEEKEPASQGEKERGSDIEN) the composition is skewed to basic and acidic residues.

Belongs to the TIC214 family. Part of the Tic complex.

It localises to the plastid. The protein localises to the chloroplast inner membrane. Involved in protein precursor import into chloroplasts. May be part of an intermediate translocation complex acting as a protein-conducting channel at the inner envelope. The chain is Protein TIC 214 from Nicotiana tomentosiformis (Tobacco).